A 516-amino-acid chain; its full sequence is 2-isopropylmalate synthase (516 aa).

In terms of domain architecture, Pyruvate carboxyltransferase spans 8-270 (IYIFDTTLRD…YTGIKTESIY (263 aa)). Mn(2+) contacts are provided by aspartate 17, histidine 205, histidine 207, and asparagine 241. Positions 394–516 (KLIYLNVVSG…DAGKIKSEYE (123 aa)) are regulatory domain.

Belongs to the alpha-IPM synthase/homocitrate synthase family. LeuA type 1 subfamily. Homodimer. It depends on Mn(2+) as a cofactor.

Its subcellular location is the cytoplasm. It carries out the reaction 3-methyl-2-oxobutanoate + acetyl-CoA + H2O = (2S)-2-isopropylmalate + CoA + H(+). It participates in amino-acid biosynthesis; L-leucine biosynthesis; L-leucine from 3-methyl-2-oxobutanoate: step 1/4. Its function is as follows. Catalyzes the condensation of the acetyl group of acetyl-CoA with 3-methyl-2-oxobutanoate (2-ketoisovalerate) to form 3-carboxy-3-hydroxy-4-methylpentanoate (2-isopropylmalate). This Syntrophus aciditrophicus (strain SB) protein is 2-isopropylmalate synthase.